Reading from the N-terminus, the 385-residue chain is 8-amino-7-oxononanoate synthase (385 aa).

Arg-21 is a binding site for substrate. 108-109 contributes to the pyridoxal 5'-phosphate binding site; it reads GF. His-133 contacts substrate. Ser-179, His-207, and Thr-233 together coordinate pyridoxal 5'-phosphate. Lys-236 bears the N6-(pyridoxal phosphate)lysine mark. Substrate is bound at residue Thr-352.

The protein belongs to the class-II pyridoxal-phosphate-dependent aminotransferase family. BioF subfamily. Homodimer. Requires pyridoxal 5'-phosphate as cofactor.

The enzyme catalyses 6-carboxyhexanoyl-[ACP] + L-alanine + H(+) = (8S)-8-amino-7-oxononanoate + holo-[ACP] + CO2. It functions in the pathway cofactor biosynthesis; biotin biosynthesis. Its function is as follows. Catalyzes the decarboxylative condensation of pimeloyl-[acyl-carrier protein] and L-alanine to produce 8-amino-7-oxononanoate (AON), [acyl-carrier protein], and carbon dioxide. In Pseudescherichia vulneris (Escherichia vulneris), this protein is 8-amino-7-oxononanoate synthase.